Consider the following 341-residue polypeptide: 2-dehydro-3-deoxy-L-galactonate 5-dehydrogenase (341 aa).

Cysteine 37 contacts Zn(2+). Residues threonine 39 and histidine 42 each act as charge relay system in the active site. 6 residues coordinate Zn(2+): histidine 60, glutamate 61, cysteine 90, cysteine 93, cysteine 96, and cysteine 104.

This sequence belongs to the zinc-containing alcohol dehydrogenase family. Zn(2+) is required as a cofactor.

The enzyme catalyses 2-dehydro-3-deoxy-L-galactonate + NAD(+) = 3-deoxy-D-glycero-2,5-hexodiulosonate + NADH + H(+). Involved in the degradation of 3,6-anhydro-L-galactose, which is the major monomeric sugar of red macroalgae. Catalyzes the third step of the pathway, the NAD(+)-dependent oxidation of 2-dehydro-3-deoxy-L-galactonate (L-KDGal) to 3-deoxy-D-glycero-2,5-hexodiulosonate (L-DDGal). This Pseudoalteromonas atlantica (strain T6c / ATCC BAA-1087) protein is 2-dehydro-3-deoxy-L-galactonate 5-dehydrogenase.